The chain runs to 238 residues: Flagellar L-ring protein (238 aa).

A signal peptide spans 1 to 16 (MNKAILAVAMVLLLAG). A lipid anchor (N-palmitoyl cysteine) is attached at Cys-17. Residue Cys-17 is the site of S-diacylglycerol cysteine attachment.

It belongs to the FlgH family. As to quaternary structure, the basal body constitutes a major portion of the flagellar organelle and consists of four rings (L,P,S, and M) mounted on a central rod.

It is found in the cell outer membrane. The protein localises to the bacterial flagellum basal body. Functionally, assembles around the rod to form the L-ring and probably protects the motor/basal body from shearing forces during rotation. The chain is Flagellar L-ring protein from Brucella canis (strain ATCC 23365 / NCTC 10854 / RM-666).